We begin with the raw amino-acid sequence, 101 residues long: Small ribosomal subunit protein uS14 (101 aa).

The protein belongs to the universal ribosomal protein uS14 family. Part of the 30S ribosomal subunit. Contacts proteins S3 and S10.

Functionally, binds 16S rRNA, required for the assembly of 30S particles and may also be responsible for determining the conformation of the 16S rRNA at the A site. This is Small ribosomal subunit protein uS14 from Orientia tsutsugamushi (strain Boryong) (Rickettsia tsutsugamushi).